The chain runs to 407 residues: Argininosuccinate synthase (407 aa).

ATP-binding positions include 13 to 21 and alanine 40; that span reads AYSGGLDTS. The L-citrulline site is built by tyrosine 91 and serine 96. Glycine 121 contributes to the ATP binding site. L-aspartate is bound by residues threonine 123, asparagine 127, and aspartate 128. Position 127 (asparagine 127) interacts with L-citrulline. Arginine 131, serine 182, serine 191, glutamate 267, and tyrosine 279 together coordinate L-citrulline.

It belongs to the argininosuccinate synthase family. Type 1 subfamily. Homotetramer.

The protein localises to the cytoplasm. It catalyses the reaction L-citrulline + L-aspartate + ATP = 2-(N(omega)-L-arginino)succinate + AMP + diphosphate + H(+). It functions in the pathway amino-acid biosynthesis; L-arginine biosynthesis; L-arginine from L-ornithine and carbamoyl phosphate: step 2/3. In Mesorhizobium japonicum (strain LMG 29417 / CECT 9101 / MAFF 303099) (Mesorhizobium loti (strain MAFF 303099)), this protein is Argininosuccinate synthase.